A 135-amino-acid chain; its full sequence is S-adenosylmethionine decarboxylase proenzyme (135 aa).

Serine 63 serves as the catalytic Schiff-base intermediate with substrate; via pyruvic acid. A Pyruvic acid (Ser); by autocatalysis modification is found at serine 63. Histidine 68 serves as the catalytic Proton acceptor; for processing activity. Cysteine 83 functions as the Proton donor; for catalytic activity in the catalytic mechanism.

Belongs to the prokaryotic AdoMetDC family. Type 1 subfamily. As to quaternary structure, heterotetramer of two alpha and two beta chains arranged as a dimer of alpha/beta heterodimers. Pyruvate is required as a cofactor. In terms of processing, is synthesized initially as an inactive proenzyme. Formation of the active enzyme involves a self-maturation process in which the active site pyruvoyl group is generated from an internal serine residue via an autocatalytic post-translational modification. Two non-identical subunits are generated from the proenzyme in this reaction, and the pyruvate is formed at the N-terminus of the alpha chain, which is derived from the carboxyl end of the proenzyme. The post-translation cleavage follows an unusual pathway, termed non-hydrolytic serinolysis, in which the side chain hydroxyl group of the serine supplies its oxygen atom to form the C-terminus of the beta chain, while the remainder of the serine residue undergoes an oxidative deamination to produce ammonia and the pyruvoyl group blocking the N-terminus of the alpha chain.

It carries out the reaction S-adenosyl-L-methionine + H(+) = S-adenosyl 3-(methylsulfanyl)propylamine + CO2. It participates in amine and polyamine biosynthesis; S-adenosylmethioninamine biosynthesis; S-adenosylmethioninamine from S-adenosyl-L-methionine: step 1/1. Its function is as follows. Catalyzes the decarboxylation of S-adenosylmethionine to S-adenosylmethioninamine (dcAdoMet), the propylamine donor required for the synthesis of the polyamines spermine and spermidine from the diamine putrescine. This chain is S-adenosylmethionine decarboxylase proenzyme, found in Thermodesulfovibrio yellowstonii (strain ATCC 51303 / DSM 11347 / YP87).